A 425-amino-acid chain; its full sequence is Nucleoporin nup45 (425 aa).

The span at 1–10 shows a compositional bias: polar residues; it reads MFGLNKTPSF. The segment at 1–207 is disordered; sequence MFGLNKTPSF…GFGLSNNTQT (207 aa). The segment covering 11-27 has biased composition (low complexity); it reads GSTGTQNQNTGTSAGTG. The span at 28 to 45 shows a compositional bias: polar residues; the sequence is LFSSNTFGNNTQANTPAS. Residues 47–56 show a composition bias toward gly residues; it reads GFGGVTGGAF. Residues 72–89 show a composition bias toward polar residues; the sequence is PNATSTTPGLNLFGQNPQ. 2 stretches are compositionally biased toward low complexity: residues 112–126 and 135–150; these read NQNQ…AAPT and QNQT…ANTS. A compositionally biased stretch (polar residues) spans 167-207; sequence NRPNTSTFGQFSTQPASAGLFGQSTQPSGSTGFGLSNNTQT. Phosphoserine occurs at positions 289 and 290.

It localises to the cytoplasm. It is found in the nucleus. The protein localises to the nuclear pore complex. Functions as a component of the nuclear pore complex (NPC). NPC components, collectively referred to as nucleoporins (NUPs), can play the role of both NPC structural components and of docking or interaction partners for transiently associated nuclear transport factors. Active directional transport is assured by both, a Phe-Gly (FG) repeat affinity gradient for these transport factors across the NPC and a transport cofactor concentration gradient across the nuclear envelope. This Schizosaccharomyces pombe (strain 972 / ATCC 24843) (Fission yeast) protein is Nucleoporin nup45 (nup45).